The following is a 182-amino-acid chain: Vacuolar protein sorting-associated protein 29 (182 aa).

3 residues coordinate Zn(2+): aspartate 8, histidine 10, and asparagine 39. Residue lysine 50 is modified to N6-acetyllysine. Aspartate 62, histidine 86, histidine 115, and histidine 117 together coordinate Zn(2+).

It belongs to the VPS29 family. In terms of assembly, component of the commander complex consisting of the CCC subcomplex and the retriever subcomplex. Component of the heterotrimeric retriever complex formed by VPS26C, VPS29 and VPS35L; within the complex interacts with VPS35L. Component of the heterotrimeric retromer cargo-selective complex (CSC), also described as vacuolar protein sorting subcomplex (VPS), formed by VPS26 (VPS26A or VPS26B), VPS29 and VPS35. The CSC has a highly elongated structure with VPS26 and VPS29 binding independently at opposite distal ends of VPS35 as central platform. The CSC is believed to associate with variable sorting nexins to form functionally distinct retromer complex variants. The originally described retromer complex (also called SNX-BAR retromer) is a pentamer containing the CSC and a heterodimeric membrane-deforming subcomplex formed between SNX1 or SNX2 and SNX5 or SNX6 (also called SNX-BAR subcomplex); the respective CSC and SNX-BAR subcomplexes associate with low affinity. The CSC associates with SNX3 to form a SNX3-retromer complex. The CSC associates with SNX27, the WASH complex and the SNX-BAR subcomplex to form the SNX27-retromer complex. Interacts with VPS26A, VPS35, SNX1, SNX2, SNX3, SNX27, WASHC5. Interacts with TBC1D5; this interaction is blocked by VPS35L in the retriever complex. Interacts with SNX17; the interaction is indirect; SNX17 (via its C-terminus) interacts with the retriever complex (via VPS26C and VPS35L). Interacts with VPS26B and ANKRD27. (Microbial infection) Interacts with human papillomavirus 16 minor capsid protein L2 (via C-terminus); this interaction mediates the transport of the capsid from the early endosome to the Golgi apparatus. As to expression, ubiquitous. Highly expressed in heart, lung, placenta, spleen, peripheral blood leukocytes, thymus, colon skeletal muscle, kidney and brain.

It is found in the cytoplasm. The protein localises to the membrane. Its subcellular location is the endosome membrane. The protein resides in the early endosome. It localises to the late endosome. In terms of biological role, component of the commander complex that is essential for endosomal recycling of transmembrane cargos; the commander complex is composed of the CCC subcomplex and the retriever subcomplex. Component of the retriever complex, which is a heterotrimeric complex related to retromer cargo-selective complex (CSC) and essential for retromer-independent retrieval and recycling of numerous cargos such as integrin alpha-5/beta-1 (ITGA5:ITGB1). Component of the retromer cargo-selective complex (CSC). The CSC is believed to be the core functional component of retromer or respective retromer complex variants acting to prevent missorting of selected transmembrane cargo proteins into the lysosomal degradation pathway. The recruitment of the CSC to the endosomal membrane involves RAB7A and SNX3. The SNX-BAR retromer mediates retrograde transport of cargo proteins from endosomes to the trans-Golgi network (TGN) and is involved in endosome-to-plasma membrane transport for cargo protein recycling. The SNX3-retromer mediates the retrograde endosome-to-TGN transport of WLS distinct from the SNX-BAR retromer pathway. The SNX27-retromer is believed to be involved in endosome-to-plasma membrane trafficking and recycling of a broad spectrum of cargo proteins. The CSC seems to act as recruitment hub for other proteins, such as the WASH complex and TBC1D5. Required to regulate transcytosis of the polymeric immunoglobulin receptor (pIgR-pIgA). In the endosomes, retriever complex drives the retrieval and recycling of NxxY-motif-containing cargo proteins by coupling to SNX17, a cargo essential for the homeostatic maintenance of numerous cell surface proteins associated with processes that include cell migration, cell adhesion, nutrient supply and cell signaling. The recruitment of the retriever complex to the endosomal membrane involves CCC and WASH complexes. Involved in GLUT1 endosome-to-plasma membrane trafficking; the function is dependent of association with ANKRD27. (Microbial infection) The heterotrimeric retromer cargo-selective complex (CSC) mediates the exit of human papillomavirus from the early endosome and the delivery to the Golgi apparatus. This Homo sapiens (Human) protein is Vacuolar protein sorting-associated protein 29.